The following is a 291-amino-acid chain: ATP synthase gamma chain (291 aa).

It belongs to the ATPase gamma chain family. As to quaternary structure, F-type ATPases have 2 components, CF(1) - the catalytic core - and CF(0) - the membrane proton channel. CF(1) has five subunits: alpha(3), beta(3), gamma(1), delta(1), epsilon(1). CF(0) has three main subunits: a, b and c.

It localises to the cell inner membrane. Its function is as follows. Produces ATP from ADP in the presence of a proton gradient across the membrane. The gamma chain is believed to be important in regulating ATPase activity and the flow of protons through the CF(0) complex. This is ATP synthase gamma chain from Neisseria meningitidis serogroup C / serotype 2a (strain ATCC 700532 / DSM 15464 / FAM18).